The following is a 435-amino-acid chain: Tryptophan synthase beta chain (435 aa).

An N6-(pyridoxal phosphate)lysine modification is found at K92.

It belongs to the TrpB family. In terms of assembly, tetramer of two alpha and two beta chains. Pyridoxal 5'-phosphate is required as a cofactor.

The catalysed reaction is (1S,2R)-1-C-(indol-3-yl)glycerol 3-phosphate + L-serine = D-glyceraldehyde 3-phosphate + L-tryptophan + H2O. Its pathway is amino-acid biosynthesis; L-tryptophan biosynthesis; L-tryptophan from chorismate: step 5/5. Functionally, the beta subunit is responsible for the synthesis of L-tryptophan from indole and L-serine. In Albidiferax ferrireducens (strain ATCC BAA-621 / DSM 15236 / T118) (Rhodoferax ferrireducens), this protein is Tryptophan synthase beta chain.